We begin with the raw amino-acid sequence, 192 residues long: Fe/S biogenesis protein NfuA (192 aa).

Cysteine 149 and cysteine 152 together coordinate [4Fe-4S] cluster.

The protein belongs to the NfuA family. Homodimer. The cofactor is [4Fe-4S] cluster.

Functionally, involved in iron-sulfur cluster biogenesis. Binds a 4Fe-4S cluster, can transfer this cluster to apoproteins, and thereby intervenes in the maturation of Fe/S proteins. Could also act as a scaffold/chaperone for damaged Fe/S proteins. The protein is Fe/S biogenesis protein NfuA of Shewanella halifaxensis (strain HAW-EB4).